Here is a 248-residue protein sequence, read N- to C-terminus: 21S rRNA pseudouridine(2819) synthase (248 aa).

Residue Asp58 is part of the active site.

Belongs to the pseudouridine synthase RluA family.

It localises to the mitochondrion. The enzyme catalyses uridine(2819) in 21S rRNA = pseudouridine(2819) in 21S rRNA. In terms of biological role, pseudouridylate synthase responsible for the pseudouridine-2819 formation in mitochondrial 21S rRNA. May modulate the efficiency or the fidelity of the mitochondrial translation machinery. In Candida albicans (strain SC5314 / ATCC MYA-2876) (Yeast), this protein is 21S rRNA pseudouridine(2819) synthase (PUS5).